Here is a 517-residue protein sequence, read N- to C-terminus: GMP synthase [glutamine-hydrolyzing] (517 aa).

A Glutamine amidotransferase type-1 domain is found at 11–202 (KIIVLDYGSQ…AFDICKAEAN (192 aa)). C88 (nucleophile) is an active-site residue. Residues H176 and E178 contribute to the active site. Positions 203–392 (WSMDDFITKQ…LGMPHALVWR (190 aa)) constitute a GMPS ATP-PPase domain. 230–236 (SGGVDSS) contributes to the ATP binding site.

As to quaternary structure, homodimer.

The enzyme catalyses XMP + L-glutamine + ATP + H2O = GMP + L-glutamate + AMP + diphosphate + 2 H(+). It functions in the pathway purine metabolism; GMP biosynthesis; GMP from XMP (L-Gln route): step 1/1. Catalyzes the synthesis of GMP from XMP. In Lacticaseibacillus casei (strain BL23) (Lactobacillus casei), this protein is GMP synthase [glutamine-hydrolyzing].